The chain runs to 86 residues: UPF0297 protein LSL_1110 (86 aa).

It belongs to the UPF0297 family.

In Ligilactobacillus salivarius (strain UCC118) (Lactobacillus salivarius), this protein is UPF0297 protein LSL_1110.